Consider the following 385-residue polypeptide: MKLVRKDIEKDNAGQVTLVPEEPEDMWHTYNLVQVGDSLRASTIRKVQTESSTGSVGSNRVRTTLTLCVEAIDFDSQACQLRVKGTNIQENEYVKMGAYHTIELEPNRQFTLAKKQWDSVVLERIEQACDPAWSADVAAVVMQEGLAHVCLVTPSMTLTRAKVEVNIPRKRKGNCSQHDRALERFYEQVVQAIQRHINFEVVKCILVASPGFVREQFCDYMFQQAVKTDNKVLLENRSKFLQVHASSGHKYSLKEVLCDPTVASRLSDTKAAGEVKALDDFYKMLQHEPDRAFYGLKQVERANEALAIDTLLISDELFRHQDVATRSRYVRLVDSVKENAGTVRIFSSLHVSGEQLGQLTGVAAILRFPVPELSDQEDDSSSEED.

Lys162 participates in a covalent cross-link: Glycyl lysine isopeptide (Lys-Gly) (interchain with G-Cter in SUMO2). A phosphoserine mark is found at Ser374, Ser380, Ser381, and Ser382.

The protein belongs to the eukaryotic release factor 1 family. Pelota subfamily. In terms of assembly, component of the Pelota-HBS1L complex, also named Dom34-Hbs1 complex, composed of PELO and HBS1L. Interacts with PINK1. Interacts with ABCE1. Interacts with CNOT4. The cofactor is a divalent metal cation.

The protein localises to the cytoplasm. Component of the Pelota-HBS1L complex, a complex that recognizes stalled ribosomes and triggers the No-Go Decay (NGD) pathway. In the Pelota-HBS1L complex, PELO recognizes ribosomes stalled at the 3' end of an mRNA and engages stalled ribosomes by destabilizing mRNA in the mRNA channel. Following mRNA extraction from stalled ribosomes by the SKI complex, the Pelota-HBS1L complex promotes recruitment of ABCE1, which drives the disassembly of stalled ribosomes, followed by degradation of damaged mRNAs as part of the NGD pathway. As part of the PINK1-regulated signaling, upon mitochondrial damage is recruited to the ribosome/mRNA-ribonucleoprotein complex associated to mitochondrial outer membrane thereby enabling the recruitment of autophagy receptors and induction of mitophagy. This Rattus norvegicus (Rat) protein is Protein pelota homolog (Pelo).